We begin with the raw amino-acid sequence, 213 residues long: Orotate phosphoribosyltransferase (213 aa).

Lys-26 contributes to the 5-phospho-alpha-D-ribose 1-diphosphate binding site. 34 to 35 contributes to the orotate binding site; the sequence is FF. 5-phospho-alpha-D-ribose 1-diphosphate contacts are provided by residues 72–73, Arg-98, Lys-99, Lys-102, His-104, and 123–131; these read YK and DDVISAGTS. The orotate site is built by Ser-127 and Arg-155.

Belongs to the purine/pyrimidine phosphoribosyltransferase family. PyrE subfamily. Homodimer. Mg(2+) serves as cofactor.

It catalyses the reaction orotidine 5'-phosphate + diphosphate = orotate + 5-phospho-alpha-D-ribose 1-diphosphate. The protein operates within pyrimidine metabolism; UMP biosynthesis via de novo pathway; UMP from orotate: step 1/2. Functionally, catalyzes the transfer of a ribosyl phosphate group from 5-phosphoribose 1-diphosphate to orotate, leading to the formation of orotidine monophosphate (OMP). In Neisseria meningitidis serogroup C (strain 053442), this protein is Orotate phosphoribosyltransferase.